A 465-amino-acid polypeptide reads, in one-letter code: uncharacterized protein (465 aa).

Positions 1-15 are enriched in basic and acidic residues; sequence MEKNYIFENSIYKDE. Disordered stretches follow at residues 1 to 31 and 288 to 320; these read MEKNYIFENSIYKDENENDNEDDQYYNNNSS and QLEKQLINEQQQHQQQQELNNSSQPQQEQEQLP.

This is an uncharacterized protein from Dictyostelium discoideum (Social amoeba).